The chain runs to 120 residues: MSRVKSGKVTHARHRKVIKQAKGYYAARSTNFRTATQAVDKANQYATRDRKARKRNFRALWIQRINAAVRLFDIEMTYSRFINGLSKAGIEVDRKVLADLAVHEPEAFNAIAAQAKAALA.

It belongs to the bacterial ribosomal protein bL20 family.

Functionally, binds directly to 23S ribosomal RNA and is necessary for the in vitro assembly process of the 50S ribosomal subunit. It is not involved in the protein synthesizing functions of that subunit. The sequence is that of Large ribosomal subunit protein bL20 from Cereibacter sphaeroides (strain ATCC 17029 / ATH 2.4.9) (Rhodobacter sphaeroides).